The chain runs to 167 residues: SsrA-binding protein (167 aa).

Positions 139–167 (QAHDKRHAEKEREWQRDKQRIMRAHNRNA) are disordered. Residues 144-158 (RHAEKEREWQRDKQR) are compositionally biased toward basic and acidic residues.

This sequence belongs to the SmpB family.

The protein resides in the cytoplasm. Its function is as follows. Required for rescue of stalled ribosomes mediated by trans-translation. Binds to transfer-messenger RNA (tmRNA), required for stable association of tmRNA with ribosomes. tmRNA and SmpB together mimic tRNA shape, replacing the anticodon stem-loop with SmpB. tmRNA is encoded by the ssrA gene; the 2 termini fold to resemble tRNA(Ala) and it encodes a 'tag peptide', a short internal open reading frame. During trans-translation Ala-aminoacylated tmRNA acts like a tRNA, entering the A-site of stalled ribosomes, displacing the stalled mRNA. The ribosome then switches to translate the ORF on the tmRNA; the nascent peptide is terminated with the 'tag peptide' encoded by the tmRNA and targeted for degradation. The ribosome is freed to recommence translation, which seems to be the essential function of trans-translation. This chain is SsrA-binding protein, found in Xylella fastidiosa (strain 9a5c).